We begin with the raw amino-acid sequence, 319 residues long: NADH-quinone oxidoreductase subunit H 1 (319 aa).

8 helical membrane passes run 8 to 28 (LFNI…LIWI), 74 to 94 (LVFI…FAVI), 107 to 127 (IGLL…VLGG), 147 to 167 (LSYE…AGTF), 179 to 199 (MWFC…GIAE), 230 to 250 (FFVG…TLFF), 258 to 278 (LPPL…FILL), and 297 to 317 (LMLP…LALD).

The protein belongs to the complex I subunit 1 family. In terms of assembly, NDH-1 is composed of 14 different subunits. Subunits NuoA, H, J, K, L, M, N constitute the membrane sector of the complex.

It is found in the cell inner membrane. It catalyses the reaction a quinone + NADH + 5 H(+)(in) = a quinol + NAD(+) + 4 H(+)(out). Functionally, NDH-1 shuttles electrons from NADH, via FMN and iron-sulfur (Fe-S) centers, to quinones in the respiratory chain. The immediate electron acceptor for the enzyme in this species is believed to be ubiquinone. Couples the redox reaction to proton translocation (for every two electrons transferred, four hydrogen ions are translocated across the cytoplasmic membrane), and thus conserves the redox energy in a proton gradient. This subunit may bind ubiquinone. The chain is NADH-quinone oxidoreductase subunit H 1 from Nitrosococcus oceani (strain ATCC 19707 / BCRC 17464 / JCM 30415 / NCIMB 11848 / C-107).